Reading from the N-terminus, the 211-residue chain is Large ribosomal subunit protein uL3 (211 aa).

The disordered stretch occupies residues 116 to 142; sequence GTSGVMKKHGFSGNRASHGVSRNHRLG.

The protein belongs to the universal ribosomal protein uL3 family. In terms of assembly, part of the 50S ribosomal subunit. Forms a cluster with proteins L14 and L19.

Its function is as follows. One of the primary rRNA binding proteins, it binds directly near the 3'-end of the 23S rRNA, where it nucleates assembly of the 50S subunit. This Fusobacterium nucleatum subsp. nucleatum (strain ATCC 25586 / DSM 15643 / BCRC 10681 / CIP 101130 / JCM 8532 / KCTC 2640 / LMG 13131 / VPI 4355) protein is Large ribosomal subunit protein uL3.